Reading from the N-terminus, the 304-residue chain is Non-specific ribonucleoside hydrolase RihC (304 aa).

The active site involves His-233.

It belongs to the IUNH family. RihC subfamily.

Functionally, hydrolyzes both purine and pyrimidine ribonucleosides with a broad-substrate specificity. The protein is Non-specific ribonucleoside hydrolase RihC of Escherichia coli O6:H1 (strain CFT073 / ATCC 700928 / UPEC).